Reading from the N-terminus, the 627-residue chain is UvrABC system protein C (627 aa).

Positions 26-105 constitute a GIY-YIG domain; that stretch reads PEPGVYFMRD…IKQHQPYFNV (80 aa). The 36-residue stretch at 215 to 250 folds into the UVR domain; it reads QELIDILSEQMEKAAEALNFEVAARIRDQIAGLKSL.

It belongs to the UvrC family. In terms of assembly, interacts with UvrB in an incision complex.

It localises to the cytoplasm. Its function is as follows. The UvrABC repair system catalyzes the recognition and processing of DNA lesions. UvrC both incises the 5' and 3' sides of the lesion. The N-terminal half is responsible for the 3' incision and the C-terminal half is responsible for the 5' incision. The chain is UvrABC system protein C from Nostoc sp. (strain PCC 7120 / SAG 25.82 / UTEX 2576).